Here is a 281-residue protein sequence, read N- to C-terminus: Bifunctional protein FolD (281 aa).

Residues 164 to 166 (GRS), Ser189, and Thr230 contribute to the NADP(+) site.

Belongs to the tetrahydrofolate dehydrogenase/cyclohydrolase family. Homodimer.

The catalysed reaction is (6R)-5,10-methylene-5,6,7,8-tetrahydrofolate + NADP(+) = (6R)-5,10-methenyltetrahydrofolate + NADPH. The enzyme catalyses (6R)-5,10-methenyltetrahydrofolate + H2O = (6R)-10-formyltetrahydrofolate + H(+). Its pathway is one-carbon metabolism; tetrahydrofolate interconversion. Functionally, catalyzes the oxidation of 5,10-methylenetetrahydrofolate to 5,10-methenyltetrahydrofolate and then the hydrolysis of 5,10-methenyltetrahydrofolate to 10-formyltetrahydrofolate. In Dictyoglomus turgidum (strain DSM 6724 / Z-1310), this protein is Bifunctional protein FolD.